The sequence spans 418 residues: Putative competence-damage inducible protein (418 aa).

The protein belongs to the CinA family.

The sequence is that of Putative competence-damage inducible protein from Streptococcus pneumoniae serotype 19F (strain G54).